Reading from the N-terminus, the 373-residue chain is Glutamate 5-kinase 2 (373 aa).

K11 contacts ATP. Positions 51, 138, and 150 each coordinate substrate. ATP is bound by residues 170 to 171 (SD) and 212 to 218 (TGGMKSK). The region spanning 279 to 355 (EGDIVVHNES…TNQETAASSQ (77 aa)) is the PUA domain.

Belongs to the glutamate 5-kinase family.

Its subcellular location is the cytoplasm. The enzyme catalyses L-glutamate + ATP = L-glutamyl 5-phosphate + ADP. It participates in amino-acid biosynthesis; L-proline biosynthesis; L-glutamate 5-semialdehyde from L-glutamate: step 1/2. Its function is as follows. Catalyzes the transfer of a phosphate group to glutamate to form L-glutamate 5-phosphate. The sequence is that of Glutamate 5-kinase 2 from Bacillus licheniformis (strain ATCC 14580 / DSM 13 / JCM 2505 / CCUG 7422 / NBRC 12200 / NCIMB 9375 / NCTC 10341 / NRRL NRS-1264 / Gibson 46).